The following is a 55-amino-acid chain: Chromatin protein Cren7 (55 aa).

The protein belongs to the Cren7 family. Monomer. In terms of processing, methylated at multiple sites, to varying extents.

It is found in the chromosome. Its subcellular location is the cytoplasm. A chromatin protein, binds double-stranded DNA without sequence specificity. Constrains negative DNA supercoils. The chain is Chromatin protein Cren7 from Ignicoccus hospitalis (strain KIN4/I / DSM 18386 / JCM 14125).